The following is a 490-amino-acid chain: Transcriptional regulator FleQ (490 aa).

L142 contacts 3',3'-c-di-GMP. Residues V147 and 177–182 contribute to the ADP site; that span reads GTGKEV. 3',3'-c-di-GMP is bound by residues 186-189 and 330-341; these read NLHY and ELISRMEHEKRG. 2 residues coordinate ADP: R334 and R363.

In terms of assembly, forms homodimers. Forms homohexamers that inhibit transcription initiation. Interacts with FleN; this complex is formed in the presence as well as in the absence of c-di-GMP or ATP.

C-di-GMP interaction leads to active site obstruction, hexameric ring destabilization thus relieving DNA bending and activating gene transcription. Functionally, AAA+ ATPase enhancer-binding protein that acts as a transcription regulator and plays a role in the modulation of mucin adhesion and flagellar gene expression. In addition to flagella genes, also regulates expression of biofilm-related genes. Functions as a transcriptional repressor in the absence of c-di-GMP and as an activator when c-di-GMP is present. In Pseudomonas aeruginosa (strain ATCC 15692 / DSM 22644 / CIP 104116 / JCM 14847 / LMG 12228 / 1C / PRS 101 / PAO1), this protein is Transcriptional regulator FleQ.